The chain runs to 201 residues: Small ribosomal subunit protein uS4c (201 aa).

Residues 13 to 43 (RRLGDLPGLSRKAIKRPYPPGEHGQKPRKPS) form a disordered region. In terms of domain architecture, S4 RNA-binding spans 90–154 (MRLDNTIFRL…SKQLVESYLA (65 aa)).

It belongs to the universal ribosomal protein uS4 family. In terms of assembly, part of the 30S ribosomal subunit. Contacts protein S5. The interaction surface between S4 and S5 is involved in control of translational fidelity.

It localises to the plastid. The protein localises to the chloroplast. Its function is as follows. One of the primary rRNA binding proteins, it binds directly to 16S rRNA where it nucleates assembly of the body of the 30S subunit. Functionally, with S5 and S12 plays an important role in translational accuracy. The polypeptide is Small ribosomal subunit protein uS4c (rps4) (Porphyra purpurea (Red seaweed)).